Reading from the N-terminus, the 526-residue chain is Microphthalmia-associated transcription factor (526 aa).

The residue at position 5 (Ser5) is a Phosphoserine; by MTOR. Disordered stretches follow at residues 20–54 (EPKT…STMT) and 155–179 (VLSS…SAPN). Low complexity predominate over residues 34–44 (SSSSAEHSGAS). Ser180 carries the phosphoserine; by MAPK modification. Residues 224–291 (DDVIDDIISL…PANLPNIKRE (68 aa)) are transactivation. Ser280 is subject to Phosphoserine. A Glycyl lysine isopeptide (Lys-Gly) (interchain with G-Cter in SUMO) cross-link involves residue Lys289. A bHLH domain is found at 311–364 (QKKDNHNLIERRRRFNINDRIKELGTLIPKSNDPDMRWNKGTILKASVDYIRKL). Residues 355-401 (KASVDYIRKLQREQQRAKDLENRQKKLEHANRHLLLRVQELEMQARA) are a coiled coil. The interval 374–395 (LENRQKKLEHANRHLLLRVQEL) is leucine-zipper. The segment at 401-431 (AHGLSLIPSTGLCSPDLVNRIIKQEPVLENC) is DNA-binding regulation. Ser405 is subject to Phosphoserine; by GSK3. A Phosphoserine modification is found at Ser414. Lys423 is covalently cross-linked (Glycyl lysine isopeptide (Lys-Gly) (interchain with G-Cter in SUMO)). The residue at position 491 (Ser491) is a Phosphoserine. The interval 496-526 (TDPLLSSVSPGASKTSSRRSSMSAEETEHAC) is disordered. Low complexity predominate over residues 507-519 (ASKTSSRRSSMSA). Ser516 bears the Phosphoserine; by RPS6KA1 mark.

The protein belongs to the MiT/TFE family. In terms of assembly, homodimer or heterodimer; dimerization is mediated via the coiled coil region. Efficient DNA binding requires dimerization with another bHLH protein. Binds DNA in the form of homodimer or heterodimer with either TFE3, TFEB or TFEC. Interacts with small GTPases Rag (RagA/RRAGA, RagB/RRAGB, RagC/RRAGC and/or RagD/RRAGD); promoting its recruitment to lysosomal membrane in the presence of nutrients. Interacts with KARS1. Identified in a complex with HINT1 and CTNNB1. Interacts with VSX2. In terms of processing, when nutrients are present, phosphorylation by MTOR at Ser-5 via non-canonical mTORC1 pathway promotes ubiquitination by the SCF(BTRC) complex, followed by degradation. Phosphorylation at Ser-405 significantly enhances the ability to bind the tyrosinase promoter. Phosphorylation by MARK3/cTAK1 at Ser-280 promotes association with 14-3-3/YWHA adapters and retention in the cytosol. Phosphorylated at Ser-180 and Ser-516 following KIT signaling, triggering a short live activation: Phosphorylation at Ser-180 and Ser-516 by MAPK and RPS6KA1, respectively, activate the transcription factor activity but also promote ubiquitination and subsequent degradation by the proteasome. Phosphorylated in response to blue light (415nm). Ubiquitinated by the SCF(BTRC) and SCF(FBXW11) complexes following phosphorylation ar Ser-5 by MTOR, leading to its degradation by the proteasome. Ubiquitinated following phosphorylation at Ser-180, leading to subsequent degradation by the proteasome. Deubiquitinated by USP13, preventing its degradation. As to expression, in the adult, expressed at high levels in the heart, skin, skeletal muscle, intestine, stomach, kidney, ovary, lung, spleen and brain. In the embryo, expressed in developing eye, ear, skin and heart. Isoform M is expressed in melanocytes and also in the embryonic and adult heart while isoform A and isoform H are more widely expressed.

The protein localises to the nucleus. The protein resides in the cytoplasm. Its subcellular location is the lysosome membrane. Transcription factor that acts as a master regulator of melanocyte survival and differentiation as well as melanosome biogenesis. Binds to M-boxes (5'-TCATGTG-3') and symmetrical DNA sequences (E-boxes) (5'-CACGTG-3') found in the promoter of pigmentation genes, such as tyrosinase (TYR). Involved in the cellular response to amino acid availability by acting downstream of MTOR: in the presence of nutrients, MITF phosphorylation by MTOR promotes its inactivation. Upon starvation or lysosomal stress, inhibition of MTOR induces MITF dephosphorylation, resulting in transcription factor activity. Plays an important role in melanocyte development by regulating the expression of tyrosinase (TYR) and tyrosinase-related protein 1 (TYRP1). Plays a critical role in the differentiation of various cell types, such as neural crest-derived melanocytes, mast cells, osteoclasts and optic cup-derived retinal pigment epithelium. The chain is Microphthalmia-associated transcription factor (Mitf) from Mus musculus (Mouse).